A 193-amino-acid chain; its full sequence is ATP-dependent Clp protease proteolytic subunit 2 (193 aa).

Residue Ser98 is the Nucleophile of the active site. His123 is an active-site residue.

This sequence belongs to the peptidase S14 family. In terms of assembly, fourteen ClpP subunits assemble into 2 heptameric rings which stack back to back to give a disk-like structure with a central cavity, resembling the structure of eukaryotic proteasomes.

The protein localises to the cytoplasm. The enzyme catalyses Hydrolysis of proteins to small peptides in the presence of ATP and magnesium. alpha-casein is the usual test substrate. In the absence of ATP, only oligopeptides shorter than five residues are hydrolyzed (such as succinyl-Leu-Tyr-|-NHMec, and Leu-Tyr-Leu-|-Tyr-Trp, in which cleavage of the -Tyr-|-Leu- and -Tyr-|-Trp bonds also occurs).. Functionally, cleaves peptides in various proteins in a process that requires ATP hydrolysis. Has a chymotrypsin-like activity. Plays a major role in the degradation of misfolded proteins. This Bacillus anthracis protein is ATP-dependent Clp protease proteolytic subunit 2.